Reading from the N-terminus, the 183-residue chain is Ferritin heavy chain (183 aa).

M1 carries the N-acetylmethionine modification. N-acetylthreonine; in Ferritin heavy chain, N-terminally processed is present on T2. The region spanning 11–160 (QNYHQDSEAA…DHVTNLRKMG (150 aa)) is the Ferritin-like diiron domain. E28, E63, H66, E108, and Q142 together coordinate Fe cation. A phosphoserine mark is found at S179 and S183.

This sequence belongs to the ferritin family. As to quaternary structure, oligomer of 24 subunits. There are two types of subunits: L (light) chain and H (heavy) chain. The major chain can be light or heavy, depending on the species and tissue type. The functional molecule forms a roughly spherical shell with a diameter of 12 nm and contains a central cavity into which the insoluble mineral iron core is deposited. Interacts with NCOA4; NCOA4 promotes targeting of the iron-binding ferritin complex to autolysosomes following starvation or iron depletion.

The protein resides in the cytoplasm. Its subcellular location is the lysosome. It is found in the cytoplasmic vesicle. The protein localises to the autophagosome. The enzyme catalyses 4 Fe(2+) + O2 + 4 H(+) = 4 Fe(3+) + 2 H2O. Stores iron in a soluble, non-toxic, readily available form. Important for iron homeostasis. Has ferroxidase activity. Iron is taken up in the ferrous form and deposited as ferric hydroxides after oxidation. Also plays a role in delivery of iron to cells. Mediates iron uptake in capsule cells of the developing kidney. Delivery to lysosomes is mediated by the cargo receptor NCOA4 for autophagic degradation and release of iron. This chain is Ferritin heavy chain (FTH1), found in Pongo abelii (Sumatran orangutan).